The chain runs to 431 residues: 2-oxoisovalerate dehydrogenase subunit alpha, mitochondrial (431 aa).

Gln-140–Arg-142 lines the thiamine diphosphate pocket. 3 residues coordinate K(+): Ser-189, Thr-194, and Gln-195.

Belongs to the BCKDHA family. Thiamine diphosphate serves as cofactor.

It localises to the mitochondrion matrix. The catalysed reaction is N(6)-[(R)-lipoyl]-L-lysyl-[protein] + 3-methyl-2-oxobutanoate + H(+) = N(6)-[(R)-S(8)-2-methylpropanoyldihydrolipoyl]-L-lysyl-[protein] + CO2. Its pathway is lipid metabolism; fatty acid biosynthesis. The branched-chain alpha-keto dehydrogenase complex catalyzes the overall conversion of alpha-keto acids to acyl-CoA and CO(2). It contains multiple copies of three enzymatic components: branched-chain alpha-keto acid decarboxylase (E1), lipoamide acyltransferase (E2) and lipoamide dehydrogenase (E3). Required for the production of the monomethyl branched-chain fatty acids (mmBCFAs) isopentadecanoate (C15iso) and isoheptadecanoate (C17iso). This chain is 2-oxoisovalerate dehydrogenase subunit alpha, mitochondrial, found in Caenorhabditis elegans.